Reading from the N-terminus, the 310-residue chain is Alpha/beta hydrolase domain-containing protein 17A (310 aa).

Catalysis depends on charge relay system residues Ser190, Asp255, and His284. Ser307 is modified (phosphoserine).

Belongs to the AB hydrolase superfamily. ABHD17 family. Post-translationally, palmitoylated on cysteine residues located in a cysteine cluster at the N-terminus which promotes membrane localization. Palmitoylation is required for post-synaptic localization and for depalmitoylating activity towards DLG4/PSD95.

Its subcellular location is the cell membrane. It is found in the endosome membrane. The protein localises to the cell projection. It localises to the dendritic spine. The protein resides in the postsynaptic density membrane. It carries out the reaction S-hexadecanoyl-L-cysteinyl-[protein] + H2O = L-cysteinyl-[protein] + hexadecanoate + H(+). With respect to regulation, inhibited by palmostatin-B. Hydrolyzes fatty acids from S-acylated cysteine residues in proteins. Has depalmitoylating activity towards NRAS. Has depalmitoylating activity towards DLG4/PSD95. May have depalmitoylating activity towards MAP6. The protein is Alpha/beta hydrolase domain-containing protein 17A of Homo sapiens (Human).